A 523-amino-acid chain; its full sequence is Cytoplasmic dynein 1 light intermediate chain 1 (523 aa).

The interval 1 to 25 (MAAVGRVGSFGSSPPGLSSTYTGGP) is disordered. Low complexity predominate over residues 9–19 (SFGSSPPGLSS). 74–81 (GEDGAGKT) serves as a coordination point for ATP. S207 is subject to Phosphoserine. Position 213 is a phosphothreonine (T213). Disordered regions lie at residues 387–434 (PPTA…DPNM) and 456–523 (TGSP…GEAS). Phosphoserine is present on residues S398 and S405. T408 carries the post-translational modification Phosphothreonine. Residues S412, S419, S421, and S427 each carry the phosphoserine modification. Positions 412–421 (SVSSNVASVS) are enriched in low complexity. Residues 458-478 (SPGGPGVSGGSPAGGAGGGSS) are compositionally biased toward gly residues. A Phosphoserine modification is found at S487. The segment covering 493–503 (LDVHAELDRIT) has biased composition (basic and acidic residues). Residues 506–523 (PVTVSPTTPTSPTEGEAS) are compositionally biased toward low complexity. Phosphoserine is present on S510. Phosphothreonine is present on residues T512, T513, and T515. At S516 the chain carries Phosphoserine.

The protein belongs to the dynein light intermediate chain family. As to quaternary structure, homodimer. The cytoplasmic dynein 1 complex consists of two catalytic heavy chains (HCs) and a number of non-catalytic subunits presented by intermediate chains (ICs), light intermediate chains (LICs) and light chains (LCs); the composition seems to vary in respect to the IC, LIC and LC composition. The heavy chain homodimer serves as a scaffold for the probable homodimeric assembly of the respective non-catalytic subunits. The ICs and LICs bind directly to the HC dimer and the LCs assemble on the IC dimer. Self-associates. Interacts with DYNC1H1; DYNC1LI1 and DYNC1LI2 bind mutually exclusive to DYNC1H1. Interacts with PCNT. Forms a complex with RAB11FIP3 and RAB11A1; the interaction between DYNC1LI1 and RAB11FIP3 is direct and induces DYNC1LI1 localization onto endosomal membrane; the complex regulates endocytic trafficking. Interacts with RUFY3. (Microbial infection) Interacts with human adenovirus 5 hexon protein; this interaction probably allows virus intracellular transport. Phosphorylated during mitosis but not in interphase.

It is found in the cytoplasm. The protein resides in the chromosome. The protein localises to the centromere. It localises to the kinetochore. Its subcellular location is the cytoskeleton. It is found in the spindle pole. The protein resides in the recycling endosome membrane. Acts as one of several non-catalytic accessory components of the cytoplasmic dynein 1 complex that are thought to be involved in linking dynein to cargos and to adapter proteins that regulate dynein function. Cytoplasmic dynein 1 acts as a motor for the intracellular retrograde motility of vesicles and organelles along microtubules. May play a role in binding dynein to membranous organelles or chromosomes. Probably involved in the microtubule-dependent transport of pericentrin. Is required for progress through the spindle assembly checkpoint. The phosphorylated form appears to be involved in the selective removal of MAD1L1 and MAD1L2 but not BUB1B from kinetochores. Forms a functional Rab11/RAB11FIP3/dynein complex onto endosomal membrane that regulates the movement of peripheral sorting endosomes (SE) along microtubule tracks toward the microtubule organizing center/centrosome, generating the endosomal recycling compartment (ERC). The sequence is that of Cytoplasmic dynein 1 light intermediate chain 1 (DYNC1LI1) from Homo sapiens (Human).